The sequence spans 87 residues: Small ribosomal subunit protein uS17 (87 aa).

The protein belongs to the universal ribosomal protein uS17 family. In terms of assembly, part of the 30S ribosomal subunit.

In terms of biological role, one of the primary rRNA binding proteins, it binds specifically to the 5'-end of 16S ribosomal RNA. The chain is Small ribosomal subunit protein uS17 from Pelotomaculum thermopropionicum (strain DSM 13744 / JCM 10971 / SI).